We begin with the raw amino-acid sequence, 3411 residues long: Genome polyprotein (3411 aa).

Topologically, residues 1–104 (MSGRKAQGKT…LSSRKRRSHD (104 aa)) are cytoplasmic. The tract at residues 38–72 (PGPSRGVQGFIFFFLFNILTGKKITAHLKRLWKML) is hydrophobic; homodimerization of capsid protein C. Positions 102 to 121 (SHDVLTVQFLILGMLLMTGG) are cleaved as a propeptide — ER anchor for the capsid protein C, removed in mature form by serine protease NS3. The chain crosses the membrane as a helical span at residues 105-125 (VLTVQFLILGMLLMTGGVTLV). Residues 126–244 (RKNRWLLLNV…GERQLQKIER (119 aa)) lie on the Extracellular side of the membrane. Residues Asn-134 and Asn-150 are each glycosylated (N-linked (GlcNAc...) asparagine; by host). A helical membrane pass occupies residues 245-265 (WLVRNPFFAVTALTIAYLVGS). Residues 266-270 (NMTQR) lie on the Cytoplasmic side of the membrane. A helical transmembrane segment spans residues 271–285 (VVIALLVLAVGPAYS). Over 286 to 730 (AHCIGITDRD…TVFGSAFQGL (445 aa)) the chain is Extracellular. 8 cysteine pairs are disulfide-bonded: Cys-288–Cys-315, Cys-345–Cys-401, Cys-345–Cys-406, Cys-359–Cys-390, Cys-377–Cys-401, Cys-377–Cys-406, Cys-467–Cys-568, and Cys-585–Cys-615. A fusion peptide region spans residues 383 to 396 (DRGWGNGCGLFGKG). The chain crosses the membrane as a helical span at residues 731-751 (FGGLNWITKVIMGAVLIWVGI). Over 752-757 (NTRNMT) the chain is Extracellular. A helical transmembrane segment spans residues 758–778 (MSMSMILVGVIMMFLSLGVGA). The Extracellular segment spans residues 779–1132 (DQGCAINFGK…LVRSWVTAGE (354 aa)). Cystine bridges form between Cys-782/Cys-793, Cys-833/Cys-921, Cys-957/Cys-1002, Cys-1058/Cys-1107, Cys-1069/Cys-1091, and Cys-1090/Cys-1094. Residues Asn-908 and Asn-986 are each glycosylated (N-linked (GlcNAc...) asparagine; by host). The helical transmembrane segment at 1133–1153 (IHAVPFGLVSMMIAMEVVLRK) threads the bilayer. Topologically, residues 1154–1201 (RQGPKQMLVGGVVLLGAMLVGQVTLLDLLKLTVAVGLHFHEMNNGGDA) are cytoplasmic. A helical membrane pass occupies residues 1202-1222 (MYMALIAAFSIRPGLLIGFGL). Over 1223–1287 (RTLWSPRERL…ILPLMALLTP (65 aa)) the chain is Lumenal. The chain crosses the membrane as a helical span at residues 1288–1308 (VTMAEVRLATMLFCTVVIIGV). The Cytoplasmic portion of the chain corresponds to 1309 to 1355 (LHQNSKDTSMQKTIPLVALTLTSYLGLTQPFLGLCAFLATRIFGRRS). The helical transmembrane segment at 1356-1376 (IPVNEALAAAGLVGVLAGLAF) threads the bilayer. Residues 1377–1378 (QE) lie on the Lumenal side of the membrane. Residues 1379–1399 (MENFLGPIAVGGILMMLVSVA) traverse the membrane as a helical segment. Residues 1400–1456 (GRVDGLELKKLGEVSWEEEAEISGSSARYDVALSEQGEFKLLSEEKVPWDQVVMTSL) are Cytoplasmic-facing. Residues 1407–1446 (LKKLGEVSWEEEAEISGSSARYDVALSEQGEFKLLSEEKV) are interacts with and activates NS3 protease. An intramembrane region (helical) is located at residues 1457–1477 (ALVGAAIHPFALLLVLAGWLF). Residues 1478–2157 (HVRGARRSGD…RNALSMMPEA (680 aa)) are Cytoplasmic-facing. Residues 1485–1665 (SGDVLWDIPT…EVKEEGKEEL (181 aa)) form the Peptidase S7 domain. Active-site charge relay system; for serine protease NS3 activity residues include His-1537, Asp-1561, and Ser-1622. The Helicase ATP-binding domain maps to 1669–1825 (PTMLKKGMTT…HSNGEIEDVQ (157 aa)). An important for RNA-binding region spans residues 1673–1676 (KKGM). 1682 to 1689 (FHPGAGKT) serves as a coordination point for ATP. A DEAH box motif is present at residues 1773–1776 (DEAH). In terms of domain architecture, Helicase C-terminal spans 1820–1997 (EIEDVQTDIP…VRGGMVAPLY (178 aa)). Lys-1877 is modified (N6-acetyllysine; by host). Positions 1942–1961 (AAQRRGRIGRNPNRDGDSYY) are disordered. Residues 2158–2178 (MTIVMLFILAGLLTSGMVIFF) traverse the membrane as a helical segment. Residues 2179-2186 (MSPKGISR) are Lumenal-facing. An intramembrane region (helical) is located at residues 2187 to 2207 (MSMAMGTMAGCGYLMFLGGVK). Residues 2208–2209 (PT) lie on the Lumenal side of the membrane. A helical membrane pass occupies residues 2210 to 2230 (HISYIMLIFFVLMVVVIPEPG). Residues 2231-2241 (QQRSIQDNQVA) lie on the Cytoplasmic side of the membrane. A helical transmembrane segment spans residues 2242 to 2262 (YLIIGILTLVSVVAANELGML). Topologically, residues 2263-2293 (EKTKEDLFGKKNLIPSSASPWSWPDLDLKPG) are lumenal. The helical intramembrane region spans 2294–2314 (AAWTVYVGIVTMLSPMLHHWI). Residues 2315–2360 (KVEYGNLSLSGIAQSASVLSFMDKGIPFMKMNISVIILLVSGWNSI) lie on the Lumenal side of the membrane. The helical transmembrane segment at 2361–2380 (TVMPLLCGIGCAMLHWSLIL) threads the bilayer. At 2381–2421 (PGIKAQQSKLAQRRVFHGVAKNPVVDGNPTVDIEEAPEMPA) the chain is on the cytoplasmic side. Residues 2422-2442 (LYEKKLALYLLLALSLASVAM) traverse the membrane as a helical segment. Residues 2443–2445 (CRT) lie on the Lumenal side of the membrane. A helical membrane pass occupies residues 2446-2466 (PFSLAEGIVLASAALGPLIEG). Residues 2467–3411 (NTSLLWNGPM…DADLQPGELI (945 aa)) lie on the Cytoplasmic side of the membrane. The mRNA cap 0-1 NS5-type MT domain occupies 2507 to 2771 (GSANGKTLGE…DVILPIGTRS (265 aa)). Ser-2562 is a binding site for S-adenosyl-L-methionine. Phosphoserine is present on Ser-2562. Lys-2567 acts as the For 2'-O-MTase activity in catalysis. Gly-2592, Trp-2593, Thr-2610, Leu-2611, Asp-2637, and Ile-2638 together coordinate S-adenosyl-L-methionine. Asp-2652 (for 2'-O-MTase activity) is an active-site residue. Ile-2653 contributes to the S-adenosyl-L-methionine binding site. Catalysis depends on for 2'-O-MTase activity residues Lys-2688 and Glu-2724. S-adenosyl-L-methionine is bound at residue Tyr-2726. The short motif at 2878–2911 (RKIMKVVNRWLFRHLAREKNPRLCTKEEFIAKVR) is the Nuclear localization signal element. Residues Glu-2945, His-2949, Cys-2954, and Cys-2957 each coordinate Zn(2+). The RdRp catalytic domain maps to 3035–3187 (GGFYADDTAG…RPIDDRFGLA (153 aa)). Zn(2+)-binding residues include His-3222, Cys-3238, and Cys-3357.

This sequence in the N-terminal section; belongs to the class I-like SAM-binding methyltransferase superfamily. mRNA cap 0-1 NS5-type methyltransferase family. In terms of assembly, homodimer. Interacts (via N-terminus) with host EXOC1 (via C-terminus); this interaction results in EXOC1 degradation through the proteasome degradation pathway. Forms heterodimers with envelope protein E in the endoplasmic reticulum and Golgi. As to quaternary structure, homodimer; in the endoplasmic reticulum and Golgi. Interacts with protein prM. Interacts with non-structural protein 1. In terms of assembly, homodimer; Homohexamer when secreted. Interacts with envelope protein E. NS1 interacts with NS4B. Interacts with host complement protein CFH; this interaction leads to the degradation of C3. Interacts (via N-terminus) with serine protease NS3. As to quaternary structure, forms a heterodimer with serine protease NS3. May form homooligomers. In terms of assembly, forms a heterodimer with NS2B. Interacts with non-structural protein 2A (via N-terminus). Interacts with NS4B. Interacts with unphosphorylated RNA-directed RNA polymerase NS5; this interaction stimulates RNA-directed RNA polymerase NS5 guanylyltransferase activity. NS3 interacts with host PDCD6IP; this interaction contributes to virion release. Interacts with serine protease NS3. As to quaternary structure, homodimer. Interacts with host STAT2; this interaction prevents the establishment of cellular antiviral state. Interacts with serine protease NS3. Interacts with host TRIM23; this interaction leads to NS5 ubiquitination. Specific enzymatic cleavages in vivo yield mature proteins. The nascent capsid protein C contains a C-terminal hydrophobic domain that act as a signal sequence for translocation of prM into the lumen of the ER. Mature capsid protein C is cleaved at a site upstream of this hydrophobic domain by NS3. prM is cleaved in post-Golgi vesicles by a host furin, releasing the mature small envelope protein M, and peptide pr. Non-structural protein 2A-alpha, a C-terminally truncated form of non-structural protein 2A, results from partial cleavage by NS3. Specific enzymatic cleavages in vivo yield mature proteins peptide 2K acts as a signal sequence and is removed from the N-terminus of NS4B by the host signal peptidase in the ER lumen. Signal cleavage at the 2K-4B site requires a prior NS3 protease-mediated cleavage at the 4A-2K site. In terms of processing, cleaved in post-Golgi vesicles by a host furin, releasing the mature small envelope protein M, and peptide pr. This cleavage is incomplete as up to 30% of viral particles still carry uncleaved prM. Post-translationally, N-glycosylated. N-glycosylated. The excreted form is glycosylated and this is required for efficient secretion of the protein from infected cells. In terms of processing, polyubiquitinated; ubiquitination is probably mediated by host TRIM23 and is prerequisite for NS5-STAT2 interaction. NS5 is not ISGylated or sumoylated. Post-translationally, acetylated by host KAT5. Acetylation modulates NS3 RNA-binding and unwinding activities and plays an important positive role for viral replication. Phosphorylated on serines residues. This phosphorylation may trigger NS5 nuclear localization.

Its subcellular location is the virion. The protein localises to the host nucleus. The protein resides in the host cytoplasm. It localises to the host perinuclear region. It is found in the secreted. Its subcellular location is the virion membrane. The protein localises to the host endoplasmic reticulum membrane. It carries out the reaction Selective hydrolysis of -Xaa-Xaa-|-Yaa- bonds in which each of the Xaa can be either Arg or Lys and Yaa can be either Ser or Ala.. The enzyme catalyses RNA(n) + a ribonucleoside 5'-triphosphate = RNA(n+1) + diphosphate. It catalyses the reaction a ribonucleoside 5'-triphosphate + H2O = a ribonucleoside 5'-diphosphate + phosphate + H(+). The catalysed reaction is ATP + H2O = ADP + phosphate + H(+). It carries out the reaction a 5'-end (5'-triphosphoguanosine)-ribonucleoside in mRNA + S-adenosyl-L-methionine = a 5'-end (N(7)-methyl 5'-triphosphoguanosine)-ribonucleoside in mRNA + S-adenosyl-L-homocysteine. The enzyme catalyses a 5'-end (N(7)-methyl 5'-triphosphoguanosine)-ribonucleoside in mRNA + S-adenosyl-L-methionine = a 5'-end (N(7)-methyl 5'-triphosphoguanosine)-(2'-O-methyl-ribonucleoside) in mRNA + S-adenosyl-L-homocysteine + H(+). Functionally, plays a role in virus budding by binding to the cell membrane and gathering the viral RNA into a nucleocapsid that forms the core of a mature virus particle. During virus entry, may induce genome penetration into the host cytoplasm after hemifusion induced by the surface proteins. Can migrate to the cell nucleus where it modulates host functions. In terms of biological role, inhibits RNA silencing by interfering with host Dicer. Prevents premature fusion activity of envelope proteins in trans-Golgi by binding to envelope protein E at pH6.0. After virion release in extracellular space, gets dissociated from E dimers. Its function is as follows. Acts as a chaperone for envelope protein E during intracellular virion assembly by masking and inactivating envelope protein E fusion peptide. prM is the only viral peptide matured by host furin in the trans-Golgi network probably to avoid catastrophic activation of the viral fusion activity in acidic Golgi compartment prior to virion release. prM-E cleavage is inefficient, and many virions are only partially matured. These uncleaved prM would play a role in immune evasion. Functionally, may play a role in virus budding. Exerts cytotoxic effects by activating a mitochondrial apoptotic pathway through M ectodomain. May display a viroporin activity. In terms of biological role, binds to host cell surface receptor and mediates fusion between viral and cellular membranes. Envelope protein is synthesized in the endoplasmic reticulum in the form of heterodimer with protein prM. They play a role in virion budding in the ER, and the newly formed immature particle is covered with 60 spikes composed of heterodimer between precursor prM and envelope protein E. The virion is transported to the Golgi apparatus where the low pH causes dissociation of PrM-E heterodimers and formation of E homodimers. prM-E cleavage is inefficient, and many virions are only partially matured. These uncleaved prM would play a role in immune evasion. Involved in immune evasion, pathogenesis and viral replication. Once cleaved off the polyprotein, is targeted to three destinations: the viral replication cycle, the plasma membrane and the extracellular compartment. Essential for viral replication. Required for formation of the replication complex and recruitment of other non-structural proteins to the ER-derived membrane structures. Excreted as a hexameric lipoparticle that plays a role against host immune response. Antagonizing the complement function. Binds to the host macrophages and dendritic cells. Inhibits signal transduction originating from Toll-like receptor 3 (TLR3). Its function is as follows. Component of the viral RNA replication complex that functions in virion assembly and antagonizes the host immune response. Functionally, required cofactor for the serine protease function of NS3. May have membrane-destabilizing activity and form viroporins. In terms of biological role, displays three enzymatic activities: serine protease, NTPase and RNA helicase. NS3 serine protease, in association with NS2B, performs its autocleavage and cleaves the polyprotein at dibasic sites in the cytoplasm: C-prM, NS2A-NS2B, NS2B-NS3, NS3-NS4A, NS4A-2K and NS4B-NS5. NS3 RNA helicase binds RNA and unwinds dsRNA in the 3' to 5' direction. Also plays a role in virus assembly. Regulates the ATPase activity of the NS3 helicase activity. NS4A allows NS3 helicase to conserve energy during unwinding. Its function is as follows. Functions as a signal peptide for NS4B and is required for the interferon antagonism activity of the latter. Functionally, induces the formation of ER-derived membrane vesicles where the viral replication takes place. Inhibits interferon (IFN)-induced host STAT1 phosphorylation and nuclear translocation, thereby preventing the establishment of cellular antiviral state by blocking the IFN-alpha/beta pathway. In terms of biological role, replicates the viral (+) and (-) RNA genome, and performs the capping of genomes in the cytoplasm. NS5 methylates viral RNA cap at guanine N-7 and ribose 2'-O positions. Besides its role in RNA genome replication, also prevents the establishment of cellular antiviral state by blocking the interferon-alpha/beta (IFN-alpha/beta) signaling pathway. IFN-I induces binding of NS5 to host IFN-activated transcription factor STAT2, preventing its transcriptional activity. Host TRIM23 is the E3 ligase that interacts with and polyubiquitinates NS5 to promote its binding to STAT2 and trigger IFN-I signaling inhibition. This is Genome polyprotein from Yellow fever virus (strain Ghana/Asibi/1927) (YFV).